The sequence spans 163 residues: Large ribosomal subunit protein bL21 (163 aa).

The interval 124 to 163 (KETTKKTKATVSIKKTAKKPSEKKSAPQKKAAVVSNNKED) is disordered.

This sequence belongs to the bacterial ribosomal protein bL21 family. In terms of assembly, part of the 50S ribosomal subunit. Contacts protein L20.

In terms of biological role, this protein binds to 23S rRNA in the presence of protein L20. This chain is Large ribosomal subunit protein bL21, found in Bartonella quintana (strain Toulouse) (Rochalimaea quintana).